A 488-amino-acid chain; its full sequence is MVIWFFYGFRKIMHLSLKRIIVKCKMSQLDRTSLIQYFNSNGVLISPEALDKLIKYSSSSLIEDLIKNSDGYIDEKYVERYVSRPKVRNDYEVYLPDVRFNASIEDFRKMFVSKYEKLSKIITSSSSMRGSISIKTAKRSQGEVKVVGMVSEVSMTKNGHKRIVIEDLDDSITAIVMKDRGPVNEIILEDEVIGIIGSVSQSSKDPVIFVNEIIRPDIPYRVIDEEKHEPVYVASISDIHVGSKTFRKNEFEAMVRWISGSDPDASRVKYLILSGDVVDGIGVYPDQENDLEILNPLEQYANLAEYLVDVPEDVKVFVMPGNHDTVRLSEPQPVFPGKIRDLFEPNVAFLPNPYNLKLEGKNVLVYHGMSLNDMIELIPGANYDSIGKAIEAILVRRHLSPKYGGNTPMIPSAVDYHVIEEVPDIFITGHIHSHYIGNYKGVRYVNSSTWQSQTEYQKMMNFNPKPSKLTLFDLYSRSVIVKDFDTTL.

The protein belongs to the DNA polymerase delta/II small subunit family. As to quaternary structure, heterodimer of a large subunit and a small subunit.

It carries out the reaction DNA(n) + a 2'-deoxyribonucleoside 5'-triphosphate = DNA(n+1) + diphosphate. It catalyses the reaction Exonucleolytic cleavage in the 3'- to 5'-direction to yield nucleoside 5'-phosphates.. In terms of biological role, possesses two activities: a DNA synthesis (polymerase) and an exonucleolytic activity that degrades single-stranded DNA in the 3' to 5' direction. Has a template-primer preference which is characteristic of a replicative DNA polymerase. This chain is DNA polymerase II small subunit (polB), found in Thermoplasma acidophilum (strain ATCC 25905 / DSM 1728 / JCM 9062 / NBRC 15155 / AMRC-C165).